A 688-amino-acid polypeptide reads, in one-letter code: Alpha-1,4-glucan:maltose-1-phosphate maltosyltransferase (688 aa).

K289, Q349, and D384 together coordinate alpha-maltose 1-phosphate. D420 serves as the catalytic Nucleophile. Residue N421 participates in alpha-maltose 1-phosphate binding. The active-site Proton donor is E449. An alpha-maltose 1-phosphate-binding site is contributed by 560–561 (KY).

This sequence belongs to the glycosyl hydrolase 13 family. GlgE subfamily. As to quaternary structure, homodimer.

The catalysed reaction is alpha-maltose 1-phosphate + [(1-&gt;4)-alpha-D-glucosyl](n) = [(1-&gt;4)-alpha-D-glucosyl](n+2) + phosphate. Functionally, maltosyltransferase that uses maltose 1-phosphate (M1P) as the sugar donor to elongate linear or branched alpha-(1-&gt;4)-glucans. Is involved in a branched alpha-glucan biosynthetic pathway from trehalose, together with TreS, Mak and GlgB. This chain is Alpha-1,4-glucan:maltose-1-phosphate maltosyltransferase, found in Rhodospirillum rubrum (strain ATCC 11170 / ATH 1.1.1 / DSM 467 / LMG 4362 / NCIMB 8255 / S1).